Here is a 187-residue protein sequence, read N- to C-terminus: EP300-interacting inhibitor of differentiation 1 (187 aa).

The disordered stretch occupies residues 1–118 (MSEMAELSEL…YDYPEEEQLS (118 aa)). 2 stretches are compositionally biased toward acidic residues: residues 52-63 (LEEEGPMEEEEA) and 93-116 (FESEDEGEEFDDWEDDYDYPEEEQ). Residues 54 to 120 (EEGPMEEEEA…YPEEEQLSGA (67 aa)) are interaction with NR0B2. An LXCXE motif motif is present at residues 178–182 (LGCDE).

As to quaternary structure, interacts via its LXCXE motif with the entire pocket region of RB1. Interacts with EP300, NR0B2 and TRIM27. Ubiquitinated in U2OS osteosarcoma cells and is rapidly degraded by proteasome as cells exit the cell cycle exit. Widely expressed. Most abundantly expressed in heart, skeletal muscle, pancreas, brain and testis. Expressed at much lower levels in placenta and peripheral blood leukocyte. Barely detectable in lung. Also weakly expressed in lung carcinoma A-549 and various leukemia cell lines.

It localises to the nucleus. The protein resides in the cytoplasm. Its function is as follows. Interacts with RB1 and EP300 and acts as a repressor of MYOD1 transactivation. Inhibits EP300 and CBP histone acetyltransferase activity. May be involved in coupling cell cycle exit to the transcriptional activation of genes required for cellular differentiation. May act as a candidate coinhibitory factor for NR0B2 that can be directly linked to transcription inhibitory mechanisms. This chain is EP300-interacting inhibitor of differentiation 1, found in Homo sapiens (Human).